The sequence spans 127 residues: Small ribosomal subunit protein uS11c (127 aa).

This sequence belongs to the universal ribosomal protein uS11 family. In terms of assembly, part of the 30S ribosomal subunit.

Its subcellular location is the plastid. The protein localises to the chloroplast. In Heterosigma akashiwo (strain NIES-293 / 8280G21-1), this protein is Small ribosomal subunit protein uS11c.